A 123-amino-acid polypeptide reads, in one-letter code: UPF0102 protein Maqu_2464 (123 aa).

This sequence belongs to the UPF0102 family.

The chain is UPF0102 protein Maqu_2464 from Marinobacter nauticus (strain ATCC 700491 / DSM 11845 / VT8) (Marinobacter aquaeolei).